Here is a 674-residue protein sequence, read N- to C-terminus: E3 ubiquitin ligase Rnf157 (674 aa).

The segment at 277–316 adopts an RING-type zinc-finger fold; it reads CVVCLSDVRDTLILPCRHLCLCNACADTLRYQASNCPICR. Disordered stretches follow at residues 376 to 404 and 433 to 610; these read LTPS…GSDI and QNSS…TGRE. A compositionally biased stretch (polar residues) spans 469 to 508; the sequence is TPESENLTLSSSGAIDQSSCTGTPLSPTISSPEDPLSSSL. The span at 509 to 526 shows a compositional bias: low complexity; sequence AQSIMSMASSHSQQSQLS. The span at 527–537 shows a compositional bias: polar residues; that stretch reads TDTVSSMSGSY. Over residues 583–604 the composition is skewed to acidic residues; sequence EEMDAEGNVTEEEFASPEEDDG.

It is found in the cytoplasm. It catalyses the reaction S-ubiquitinyl-[E2 ubiquitin-conjugating enzyme]-L-cysteine + [acceptor protein]-L-lysine = [E2 ubiquitin-conjugating enzyme]-L-cysteine + N(6)-ubiquitinyl-[acceptor protein]-L-lysine.. In terms of biological role, E3 ubiquitin ligase that ubiquitinates apbb1 for its degradation by the proteasome and thus prevents apoptosis and promotes survival of neurons. Has a dual role in neurons as it is also required for dendrite growth and maintenance for which its ligase activity is not critical. May act as a scaffold molecule to regulate this process. Acts as a downstream effector of the interconnected PI3K and MAPK signaling pathways and thus participates in the regulation of the cell cycle. The protein is E3 ubiquitin ligase Rnf157 (rnf157) of Xenopus laevis (African clawed frog).